The chain runs to 266 residues: Pyridoxal phosphate phosphatase YigL (266 aa).

Residue Asp-8 is the Nucleophile of the active site. Asp-8 provides a ligand contact to Mg(2+). A phosphate-binding site is contributed by Leu-9. A Mg(2+)-binding site is contributed by Asp-10. Residues 42–43 and Lys-191 each bind phosphate; that span reads TG. Asp-214 contacts Mg(2+). Asn-217 lines the phosphate pocket.

This sequence belongs to the HAD-like hydrolase superfamily. Cof family. Mg(2+) serves as cofactor. It depends on Mn(2+) as a cofactor. Co(2+) is required as a cofactor. The cofactor is Zn(2+).

It carries out the reaction pyridoxal 5'-phosphate + H2O = pyridoxal + phosphate. The enzyme catalyses sugar phosphate + H2O = sugar + phosphate.. Catalyzes Strongly the dephosphorylation of pyridoxal-phosphate (PLP) and moderately the dephosphorylation of 2-deoxyglucose 6-phosphate (2bGLU6P) and beta-glucose 6-phosphate (bGlu6P). Also hydrolyzes both purines (GMP and IMP) and pyrimidines as secondary substrates. In Escherichia coli (strain K12), this protein is Pyridoxal phosphate phosphatase YigL (yigL).